The following is a 211-amino-acid chain: Pyridoxine/pyridoxamine 5'-phosphate oxidase (211 aa).

Residues 7 to 10 (RREY) and Lys65 each bind substrate. Residues 60 to 65 (RIVLLK), 75 to 76 (YT), Arg81, Lys82, and Gln104 each bind FMN. Substrate contacts are provided by Tyr122, Arg126, and Ser130. FMN contacts are provided by residues 139–140 (QS) and Trp184. 190 to 192 (RLH) serves as a coordination point for substrate. Arg194 serves as a coordination point for FMN.

The protein belongs to the pyridoxamine 5'-phosphate oxidase family. As to quaternary structure, homodimer. It depends on FMN as a cofactor.

It catalyses the reaction pyridoxamine 5'-phosphate + O2 + H2O = pyridoxal 5'-phosphate + H2O2 + NH4(+). The catalysed reaction is pyridoxine 5'-phosphate + O2 = pyridoxal 5'-phosphate + H2O2. Its pathway is cofactor metabolism; pyridoxal 5'-phosphate salvage; pyridoxal 5'-phosphate from pyridoxamine 5'-phosphate: step 1/1. The protein operates within cofactor metabolism; pyridoxal 5'-phosphate salvage; pyridoxal 5'-phosphate from pyridoxine 5'-phosphate: step 1/1. In terms of biological role, catalyzes the oxidation of either pyridoxine 5'-phosphate (PNP) or pyridoxamine 5'-phosphate (PMP) into pyridoxal 5'-phosphate (PLP). This chain is Pyridoxine/pyridoxamine 5'-phosphate oxidase, found in Vibrio campbellii (strain ATCC BAA-1116).